Here is a 334-residue protein sequence, read N- to C-terminus: ADP-L-glycero-D-manno-heptose-6-epimerase (334 aa).

NADP(+)-binding positions include Phe-11–Ile-12, Asp-32–Asn-33, Lys-39, Lys-54, Gln-77–Ser-81, and Asn-94. The Proton acceptor role is filled by Tyr-141. Lys-145 is an NADP(+) binding site. Position 171 (Asn-171) interacts with substrate. Residues Val-172 and Lys-180 each contribute to the NADP(+) site. Lys-180 functions as the Proton acceptor in the catalytic mechanism. Substrate-binding positions include Arg-182, His-189, Phe-203–Asn-206, Arg-216, and Tyr-295.

It belongs to the NAD(P)-dependent epimerase/dehydratase family. HldD subfamily. Homopentamer. NADP(+) serves as cofactor.

The catalysed reaction is ADP-D-glycero-beta-D-manno-heptose = ADP-L-glycero-beta-D-manno-heptose. It participates in nucleotide-sugar biosynthesis; ADP-L-glycero-beta-D-manno-heptose biosynthesis; ADP-L-glycero-beta-D-manno-heptose from D-glycero-beta-D-manno-heptose 7-phosphate: step 4/4. Functionally, catalyzes the interconversion between ADP-D-glycero-beta-D-manno-heptose and ADP-L-glycero-beta-D-manno-heptose via an epimerization at carbon 6 of the heptose. This Neisseria meningitidis serogroup C (strain 053442) protein is ADP-L-glycero-D-manno-heptose-6-epimerase.